The chain runs to 311 residues: Ribonuclease Z (311 aa).

His-61, His-63, Asp-65, His-66, His-148, Asp-216, and His-275 together coordinate Zn(2+). Residue Asp-65 is the Proton acceptor of the active site.

This sequence belongs to the RNase Z family. As to quaternary structure, homodimer. Zn(2+) is required as a cofactor.

It carries out the reaction Endonucleolytic cleavage of RNA, removing extra 3' nucleotides from tRNA precursor, generating 3' termini of tRNAs. A 3'-hydroxy group is left at the tRNA terminus and a 5'-phosphoryl group is left at the trailer molecule.. Its function is as follows. Zinc phosphodiesterase, which displays some tRNA 3'-processing endonuclease activity. Probably involved in tRNA maturation, by removing a 3'-trailer from precursor tRNA. In Clostridium novyi (strain NT), this protein is Ribonuclease Z.